Consider the following 398-residue polypeptide: 8-amino-7-oxononanoate synthase (398 aa).

Arg23 lines the substrate pocket. Residue 110 to 111 (GY) coordinates pyridoxal 5'-phosphate. His135 lines the substrate pocket. 3 residues coordinate pyridoxal 5'-phosphate: Ser181, His209, and Thr237. Lys240 carries the post-translational modification N6-(pyridoxal phosphate)lysine. Position 354 (Thr354) interacts with substrate.

This sequence belongs to the class-II pyridoxal-phosphate-dependent aminotransferase family. BioF subfamily. Homodimer. It depends on pyridoxal 5'-phosphate as a cofactor.

It carries out the reaction 6-carboxyhexanoyl-[ACP] + L-alanine + H(+) = (8S)-8-amino-7-oxononanoate + holo-[ACP] + CO2. The protein operates within cofactor biosynthesis; biotin biosynthesis. Functionally, catalyzes the decarboxylative condensation of pimeloyl-[acyl-carrier protein] and L-alanine to produce 8-amino-7-oxononanoate (AON), [acyl-carrier protein], and carbon dioxide. In Anaeromyxobacter sp. (strain K), this protein is 8-amino-7-oxononanoate synthase.